Reading from the N-terminus, the 405-residue chain is 11-beta-hydroxysteroid dehydrogenase type 2 (405 aa).

Residue 82–111 coordinates NAD(+); sequence TRAVLITGCDSGFGKETAKKLDSMGFTVLA. A substrate-binding site is contributed by Ser219. Residue Tyr232 is the Proton acceptor of the active site. Positions 335-339 are essential for protein stability; sequence RRRYY. Over residues 377-387 the composition is skewed to low complexity; the sequence is QPGQPGTTPPQ. Residues 377–405 form a disordered region; it reads QPGQPGTTPPQDAAQDPNLSPGPSPAVAR. A compositionally biased stretch (pro residues) spans 396–405; that stretch reads SPGPSPAVAR.

Belongs to the short-chain dehydrogenases/reductases (SDR) family. As to quaternary structure, interacts with ligand-free cytoplasmic NR3C2. In terms of tissue distribution, expressed in kidney, placenta, pancreas, prostate, ovary, small intestine and colon, and in lower levels in the spleen and testis. At midgestation, expressed at high levels in placenta and in fetal kidney and, at much lower levels, in fetal lung and testis.

It is found in the microsome. Its subcellular location is the endoplasmic reticulum. It carries out the reaction an 11beta-hydroxysteroid + NAD(+) = an 11-oxosteroid + NADH + H(+). The enzyme catalyses cortisol + NAD(+) = cortisone + NADH + H(+). It catalyses the reaction corticosterone + NAD(+) = 11-dehydrocorticosterone + NADH + H(+). The catalysed reaction is 11beta,17beta-dihydroxyandrost-4-ene-3-one + NAD(+) = 17beta-hydroxyandrost-4-ene-3,11-dione + NADH + H(+). It carries out the reaction 11beta-hydroxyandrost-4-ene-3,17-dione + NAD(+) = androst-4-ene-3,11,17-trione + NADH + H(+). It participates in steroid metabolism. Its activity is regulated as follows. Inhibited by glycyrrhetinic acid (derived from liquorice). In terms of biological role, catalyzes the conversion of biologically active 11beta-hydroxyglucocorticoids (11beta-hydroxysteroid) such as cortisol, to inactive 11-ketoglucocorticoids (11-oxosteroid) such as cortisone, in the presence of NAD(+). Functions as a dehydrogenase (oxidase), thereby decreasing the concentration of active glucocorticoids, thus protecting the nonselective mineralocorticoid receptor from occupation by glucocorticoids. Plays an important role in maintaining glucocorticoids balance during preimplantation and protects the fetus from excessive maternal corticosterone exposure. Catalyzes the oxidation of 11beta-hydroxytestosterone (11beta,17beta-dihydroxyandrost-4-ene-3-one) to 11-ketotestosterone (17beta-hydroxyandrost-4-ene-3,11-dione), a major bioactive androgen. Catalyzes the conversion of 11beta-hydroxyandrostenedione (11beta-hydroxyandrost-4-ene-3,17-dione) to 11-ketoandrostenedione (androst-4-ene-3,11,17-trione), which can be further metabolized to 11-ketotestosterone. Converts 7-beta-25-dihydroxycholesterol to 7-oxo-25-hydroxycholesterol in vitro. 7-beta-25-dihydroxycholesterol (not 7-oxo-25-hydroxycholesterol) acts as a ligand for the G-protein-coupled receptor (GPCR) Epstein-Barr virus-induced gene 2 (EBI2) and may thereby regulate immune cell migration. May protect ovulating oocytes and fertilizing spermatozoa from the adverse effects of cortisol. The protein is 11-beta-hydroxysteroid dehydrogenase type 2 of Homo sapiens (Human).